Here is a 337-residue protein sequence, read N- to C-terminus: tRNA N6-adenosine threonylcarbamoyltransferase (337 aa).

Fe cation contacts are provided by His111 and His115. Substrate contacts are provided by residues 134-138, Asp167, Gly180, and Asn272; that span reads LVSGG. Asp300 contributes to the Fe cation binding site.

It belongs to the KAE1 / TsaD family. Fe(2+) is required as a cofactor.

It is found in the cytoplasm. It carries out the reaction L-threonylcarbamoyladenylate + adenosine(37) in tRNA = N(6)-L-threonylcarbamoyladenosine(37) in tRNA + AMP + H(+). Functionally, required for the formation of a threonylcarbamoyl group on adenosine at position 37 (t(6)A37) in tRNAs that read codons beginning with adenine. Is involved in the transfer of the threonylcarbamoyl moiety of threonylcarbamoyl-AMP (TC-AMP) to the N6 group of A37, together with TsaE and TsaB. TsaD likely plays a direct catalytic role in this reaction. This Nitrosomonas europaea (strain ATCC 19718 / CIP 103999 / KCTC 2705 / NBRC 14298) protein is tRNA N6-adenosine threonylcarbamoyltransferase.